A 97-amino-acid chain; its full sequence is UPF0390 protein CNBD1430 (97 aa).

Disordered regions lie at residues 1-57 and 75-97; these read MAQG…INNS and RNVG…GKSR. Over residues 29-46 the composition is skewed to basic and acidic residues; it reads GKREVAPKDRQRVLERSQ. Positions 48 to 57 are enriched in polar residues; that stretch reads KQLSSKINNS.

This sequence belongs to the UPF0390 family.

The polypeptide is UPF0390 protein CNBD1430 (Cryptococcus neoformans var. neoformans serotype D (strain B-3501A) (Filobasidiella neoformans)).